A 253-amino-acid chain; its full sequence is MALSSSKFSSFSGFSLSPVSGNGVQKPCFCDLRVGEKWGSRKFRVSATTAPLTGVIFEPFEEVKKDYLAVPSVPLVSLARQNFADECESVINEQINVEYNASYVYHSLFAYFDRDNVALKGFAKFFKESSEEHREHAEKLMKYQNTRGGRVVLHPIKDVPSEFEHVEKGDALYAMELALSLEKLTNEKLLNVHSVAERNNDLEMTHFIEGEYLAEQVEAIKKISEYVAQLRRVGKGHGVWHFDQRLLHGVHGA.

The transit peptide at 1–47 (MALSSSKFSSFSGFSLSPVSGNGVQKPCFCDLRVGEKWGSRKFRVSA) directs the protein to the chloroplast. Positions 48–80 (TTAPLTGVIFEPFEEVKKDYLAVPSVPLVSLAR) are extension peptide (EP). Residues 81-234 (QNFADECESV…EYVAQLRRVG (154 aa)) form the Ferritin-like diiron domain. 4 residues coordinate Fe cation: Glu-98, His-136, Glu-182, and Gln-216.

This sequence belongs to the ferritin family. As to quaternary structure, oligomer of 24 subunits. There are two types of subunits: L (light) chain and H (heavy) chain. The major chain can be light or heavy, depending on the species and tissue type. The functional molecule forms a roughly spherical shell with a diameter of 12 nm and contains a central cavity into which the insoluble mineral iron core is deposited.

It is found in the plastid. The protein localises to the chloroplast. The catalysed reaction is 4 Fe(2+) + O2 + 4 H(+) = 4 Fe(3+) + 2 H2O. In terms of biological role, stores iron in a soluble, non-toxic, readily available form. Important for iron homeostasis. Has ferroxidase activity. Iron is taken up in the ferrous form and deposited as ferric hydroxides after oxidation. This is Ferritin-1, chloroplastic from Pisum sativum (Garden pea).